Consider the following 353-residue polypeptide: Photosystem II protein D1 (353 aa).

Thr-2 is modified (N-acetylthreonine). Thr-2 is modified (phosphothreonine). Transmembrane regions (helical) follow at residues 29 to 46 (YIGWFGVLMIPTLLTATS), 118 to 133 (HFLLGVACYMGREWEL), and 142 to 156 (WIAVAYSAPVAAATA). A chlorophyll a-binding site is contributed by His-118. Tyr-126 serves as a coordination point for pheophytin a. Asp-170 and Glu-189 together coordinate [CaMn4O5] cluster. Residues 197–218 (FHMLGVAGVFGGSLFSAMHGSL) form a helical membrane-spanning segment. Chlorophyll a is bound at residue His-198. A quinone is bound by residues His-215 and 264 to 265 (SF). His-215 contacts Fe cation. Residue His-272 coordinates Fe cation. The chain crosses the membrane as a helical span at residues 274 to 288 (FLAAWPVVGIWFTSL). [CaMn4O5] cluster contacts are provided by His-332, Glu-333, Asp-342, and Ala-344. The propeptide occupies 345 to 353 (AIDAPSVNG).

Belongs to the reaction center PufL/M/PsbA/D family. In terms of assembly, PSII is composed of 1 copy each of membrane proteins PsbA, PsbB, PsbC, PsbD, PsbE, PsbF, PsbH, PsbI, PsbJ, PsbK, PsbL, PsbM, PsbT, PsbX, PsbY, PsbZ, Psb30/Ycf12, at least 3 peripheral proteins of the oxygen-evolving complex and a large number of cofactors. It forms dimeric complexes. The D1/D2 heterodimer binds P680, chlorophylls that are the primary electron donor of PSII, and subsequent electron acceptors. It shares a non-heme iron and each subunit binds pheophytin, quinone, additional chlorophylls, carotenoids and lipids. D1 provides most of the ligands for the Mn4-Ca-O5 cluster of the oxygen-evolving complex (OEC). There is also a Cl(-1) ion associated with D1 and D2, which is required for oxygen evolution. The PSII complex binds additional chlorophylls, carotenoids and specific lipids. serves as cofactor. Post-translationally, tyr-161 forms a radical intermediate that is referred to as redox-active TyrZ, YZ or Y-Z. C-terminally processed by CTPA; processing is essential to allow assembly of the oxygen-evolving complex and thus photosynthetic growth.

Its subcellular location is the plastid. It localises to the chloroplast thylakoid membrane. It carries out the reaction 2 a plastoquinone + 4 hnu + 2 H2O = 2 a plastoquinol + O2. Its function is as follows. Photosystem II (PSII) is a light-driven water:plastoquinone oxidoreductase that uses light energy to abstract electrons from H(2)O, generating O(2) and a proton gradient subsequently used for ATP formation. It consists of a core antenna complex that captures photons, and an electron transfer chain that converts photonic excitation into a charge separation. The D1/D2 (PsbA/PsbD) reaction center heterodimer binds P680, the primary electron donor of PSII as well as several subsequent electron acceptors. This is Photosystem II protein D1 from Coffea arabica (Arabian coffee).